A 350-amino-acid polypeptide reads, in one-letter code: Mitogen-activated protein kinase HOG1 (350 aa).

The Protein kinase domain maps to 20–299 (YTDLQPVGMG…AAQALAHEYL (280 aa)). Residues 26-34 (VGMGAFGLV) and Lys-49 contribute to the ATP site. Asp-141 serves as the catalytic Proton acceptor. Positions 171–173 (TGY) match the TXY motif.

The protein belongs to the protein kinase superfamily. Ser/Thr protein kinase family. MAP kinase subfamily. HOG1 sub-subfamily. It depends on Mg(2+) as a cofactor.

Its subcellular location is the cytoplasm. It localises to the nucleus. It carries out the reaction L-seryl-[protein] + ATP = O-phospho-L-seryl-[protein] + ADP + H(+). The enzyme catalyses L-threonyl-[protein] + ATP = O-phospho-L-threonyl-[protein] + ADP + H(+). In terms of biological role, proline-directed serine/threonine-protein kinase involved in a signal transduction pathway that is activated by changes in the osmolarity of the extracellular environment. Controls osmotic regulation of transcription of target genes. Involved in environmental stress response. Via the downstream MSN2 transcription factor, may play roles in the regulation of growth, conidiation, trap development, fatty acid metabolism and secondary metabolites biosynthesis. The chain is Mitogen-activated protein kinase HOG1 from Arthrobotrys oligospora (strain ATCC 24927 / CBS 115.81 / DSM 1491) (Nematode-trapping fungus).